Reading from the N-terminus, the 216-residue chain is Inner membrane assembly complex subunit 22 (216 aa).

A mitochondrion-targeting transit peptide spans 1–26; sequence MFMARQVLRNGLFLRSLAPIKITART. Residues 27 to 43 lie on the Mitochondrial matrix side of the membrane; it reads VASANAGIKRKSRFDKT. The chain crosses the membrane as a helical span at residues 44 to 63; it reads MIKPLLLVMIFGSILNAVIA. Residues 64–93 adopt a coiled-coil conformation; sequence EKRNIIDMERKYKLKLDKLKELIRRVHDNN. Topologically, residues 64-216 are mitochondrial intermembrane; it reads EKRNIIDMER…KEHDKIPKFL (153 aa).

As to quaternary structure, component of the inner membrane assembly (INA) complex, composed of INA17 and INA22. Interacts with a subset of F(1)F(0)-ATP synthase subunits of the F(1)-domain and the peripheral stalk.

It is found in the mitochondrion inner membrane. Functionally, component of the INA complex (INAC) that promotes the biogenesis of mitochondrial F(1)F(0)-ATP synthase. INAC facilitates the assembly of the peripheral stalk and promotes the assembly of the catalytic F(1)-domain with the membrane-embedded F(0)-domain. The sequence is that of Inner membrane assembly complex subunit 22 from Saccharomyces cerevisiae (strain ATCC 204508 / S288c) (Baker's yeast).